Reading from the N-terminus, the 128-residue chain is Arginine decarboxylase proenzyme (128 aa).

Ser-76 acts as the Schiff-base intermediate with substrate; via pyruvic acid in catalysis. Pyruvic acid (Ser); by autocatalysis is present on Ser-76. Catalysis depends on His-81, which acts as the Proton acceptor; for processing activity. The active-site Proton donor; for catalytic activity is the Cys-96.

The protein belongs to the prokaryotic AdoMetDC family. Type 1 subfamily. Heterooctamer of four alpha and four beta chains arranged as a tetramer of alpha/beta heterodimers. Requires pyruvate as cofactor. In terms of processing, is synthesized initially as an inactive proenzyme. Formation of the active enzyme involves a self-maturation process in which the active site pyruvoyl group is generated from an internal serine residue via an autocatalytic post-translational modification. Two non-identical subunits are generated from the proenzyme in this reaction, and the pyruvate is formed at the N-terminus of the alpha chain, which is derived from the carboxyl end of the proenzyme. The post-translation cleavage follows an unusual pathway, termed non-hydrolytic serinolysis, in which the side chain hydroxyl group of the serine supplies its oxygen atom to form the C-terminus of the beta chain, while the remainder of the serine residue undergoes an oxidative deamination to produce ammonia and the pyruvoyl group blocking the N-terminus of the alpha chain.

It catalyses the reaction L-arginine + H(+) = agmatine + CO2. It functions in the pathway amine and polyamine biosynthesis; agmatine biosynthesis; agmatine from L-arginine: step 1/1. Functionally, specifically catalyzes the decarboxylation of L-arginine to agmatine. Has no S-adenosylmethionine decarboxylase (AdoMetDC) activity. The chain is Arginine decarboxylase proenzyme from Sulfurisphaera tokodaii (strain DSM 16993 / JCM 10545 / NBRC 100140 / 7) (Sulfolobus tokodaii).